A 648-amino-acid polypeptide reads, in one-letter code: Bifunctional lysine-specific demethylase and histidyl-hydroxylase NO66 (648 aa).

Positions 1–168 (MSKVSSIFDT…KGAKAAKKNK (168 aa)) are disordered. A compositionally biased stretch (low complexity) spans 17–28 (PATTENGAAAKP). The segment covering 109 to 119 (DHRKHKEKLRK) has biased composition (basic residues). Polar residues predominate over residues 123–137 (GVENSRQAAASTSML). Basic residues predominate over residues 155 to 168 (PVHHKGAKAAKKNK). Residues 308 to 453 (CSIRMLNPQT…DLLELYLPHA (146 aa)) enclose the JmjC domain. Fe cation is bound by residues His354, Asp356, and His419.

Belongs to the ROX family. NO66 subfamily. Requires Fe(2+) as cofactor.

It localises to the nucleus. It carries out the reaction N(6),N(6)-dimethyl-L-lysyl(36)-[histone H3] + 2 2-oxoglutarate + 2 O2 = L-lysyl(36)-[histone H3] + 2 formaldehyde + 2 succinate + 2 CO2. Functionally, oxygenase that can act as both a histone lysine demethylase and a ribosomal histidine hydroxylase. Specifically demethylates 'Lys-4' (H3K4me) and 'Lys-36' (H3K36me) of histone H3, thereby playing a central role in histone code. The protein is Bifunctional lysine-specific demethylase and histidyl-hydroxylase NO66 of Culex quinquefasciatus (Southern house mosquito).